The primary structure comprises 975 residues: Protein cramped (975 aa).

Disordered stretches follow at residues 1–37, 71–111, 318–346, 403–450, and 809–844; these read MEELCKQPPPPPPLPPPPSSPSVAIEDPLPNGKGGGA, QKMK…GSGK, AIFPSSLPSTATNNNNNNNETEPMQPSVA, PVAA…LMKM, and PIDRVDGTSSGGISSSGSKPDSSMGATAASQDQEPG. Residues 7–20 are compositionally biased toward pro residues; sequence QPPPPPPLPPPPSS. A compositionally biased stretch (basic and acidic residues) spans 86–98; sequence SEREPNKKEEKAA. Residues 100 to 111 show a composition bias toward polar residues; that stretch reads KTPSQLKTGSGK. An SANT domain is found at 109-173; that stretch reads SGKTTWTNVE…HYYQTYHKIC (65 aa). The span at 410-425 shows a compositional bias: basic and acidic residues; sequence LRTESGSEKRSPETKK. Over residues 815–833 the composition is skewed to low complexity; it reads GTSSGGISSSGSKPDSSMG.

It belongs to the cramped family.

It localises to the nucleus. In terms of biological role, polycomb group (Pc-G) genes are needed to maintain expression patterns of the homeotic selector genes of the Antennapedia (Antp-C) and Bithorax (Bx-C) complexes, and hence for the maintenance of segmental determination. Can act as a modifier of position effect variegation (PEV). The protein is Protein cramped (crm) of Drosophila sechellia (Fruit fly).